A 98-amino-acid polypeptide reads, in one-letter code: DNA-binding protein Fis (98 aa).

A DNA-binding region (H-T-H motif) is located at residues 74–93; the sequence is QTRAATMMGINRGTLRKKLK.

It belongs to the transcriptional regulatory Fis family. As to quaternary structure, homodimer.

Activates ribosomal RNA transcription. Plays a direct role in upstream activation of rRNA promoters. This Vibrio atlanticus (strain LGP32) (Vibrio splendidus (strain Mel32)) protein is DNA-binding protein Fis.